The following is a 766-amino-acid chain: AMP deaminase 3 (766 aa).

Ser-85 and Ser-107 each carry phosphoserine. The tract at residues 89–114 is disordered; it reads QMPTQQDWKGPPTASPAMSPATPLVP. The span at 99 to 110 shows a compositional bias: low complexity; the sequence is PPTASPAMSPAT. Residues His-316 and His-318 each coordinate Zn(2+). Substrate-binding positions include His-318 and 387-392; that span reads KFNSKY. His-585 is a Zn(2+) binding site. Residue Glu-588 coordinates substrate. The active-site Proton acceptor is His-607. Asp-662 lines the Zn(2+) pocket. 663 to 666 is a substrate binding site; that stretch reads DPMQ.

This sequence belongs to the metallo-dependent hydrolases superfamily. Adenosine and AMP deaminases family. In terms of assembly, homotetramer. Zn(2+) is required as a cofactor. As to expression, found in heart, lung brain, spleen, kidney and to a lesser extent in liver.

The enzyme catalyses AMP + H2O + H(+) = IMP + NH4(+). It functions in the pathway purine metabolism; IMP biosynthesis via salvage pathway; IMP from AMP: step 1/1. AMP deaminase plays a critical role in energy metabolism. The sequence is that of AMP deaminase 3 from Mus musculus (Mouse).